Consider the following 194-residue polypeptide: Lytic chitin monooxygenase (194 aa).

The signal sequence occupies residues 1-28 (MKKSLLTIVLAFSFVLGGAALAPTVSEA). Residues histidine 29 and histidine 114 each coordinate Cu cation. Positions 29-191 (HGYVASPGSR…VNAFYQAIDV (163 aa)) constitute a Chitin-binding type-4 domain.

Cu(2+) serves as cofactor.

It localises to the secreted. The enzyme catalyses [(1-&gt;4)-N-acetyl-beta-D-glucosaminyl]n+m + reduced acceptor + O2 = [(1-&gt;4)-N-acetyl-beta-D-glucosaminyl]m-1-(1-&gt;4)-2-(acetylamino)-2-deoxy-D-glucono-1,5-lactone + [(1-&gt;4)-N-acetyl-beta-D-glucosaminyl]n + acceptor + H2O.. Its pathway is glycan degradation; chitin degradation. Involved in chitin degradation. Catalyzes the oxidative cleavage of glycosidic bonds in both alpha- and beta-chitin via a copper-dependent mechanism, leading to oxidized chitooligosaccharides with a dominance of even-numbered products. Acts synergistically with the chitinase EfChi18A, and combining the two enzymes leads to rapid and complete depolymerization of crystalline chitin, especially with beta-chitin as a substrate. Is likely involved in a chitin degradation pathway that allows E.faecalis V583 to grow on chitin as a carbon source. This chain is Lytic chitin monooxygenase, found in Enterococcus faecalis (strain ATCC 700802 / V583).